The chain runs to 396 residues: L-lactate dehydrogenase (396 aa).

One can recognise an FMN hydroxy acid dehydrogenase domain in the interval 1 to 380 (MIISAASDYR…TQDSLVQVLG (380 aa)). Residue Tyr-24 participates in substrate binding. 2 residues coordinate FMN: Ser-106 and Gln-127. Tyr-129 lines the substrate pocket. Thr-155 provides a ligand contact to FMN. Arg-164 lines the substrate pocket. Lys-251 contributes to the FMN binding site. Catalysis depends on His-275, which acts as the Proton acceptor. A substrate-binding site is contributed by Arg-278. An FMN-binding site is contributed by 306 to 330 (DSGIRNGLDVVRMIALGADTVLLGR).

It belongs to the FMN-dependent alpha-hydroxy acid dehydrogenase family. The cofactor is FMN.

The protein localises to the cell inner membrane. It carries out the reaction (S)-lactate + A = pyruvate + AH2. Its function is as follows. Catalyzes the conversion of L-lactate to pyruvate. Is coupled to the respiratory chain. The polypeptide is L-lactate dehydrogenase (Escherichia coli O1:K1 / APEC).